The chain runs to 465 residues: MSIQVYNTLTRKKEPFIPLEPNKVKMYVCGPTVYNYIHIGNARPAIVFDTIRRYLQFRGYEVQYVSNFTDVDDKLIRAARELGEDVPTIAERFIEAYFEDITALGCKKADVHPRVTENIDTIIQFIEQLIEKGYAYEVDGDVYYRTRRFSDYGKLSHQSVDELKSGARIEVGEKKEDPLDFALWKAAKEGEIYWDSPWGKGRPGWHIECSAMARKYLGDTIDIHAGGQDLTFPHHENEIAQSEALTGKPFAKYWLHNGYINIDNEKMSKSLGNFILVHDIIKQVDPQVLRFFMLSVHYRHPINYSQPLLESARSGLERLKTAYANLKHRLESSTNLTTNDEQWLAKIEELRNEFIREMDDDFNTANGIAVLFELAKQANVYLMENHTSQQVIQAFLQQFEQLFDVLGLSLQQDELLDEEIEALIQQRIEARKNRDFALADRIRDELKAKNIILEDTPQGTRWRRG.

Position 29 (Cys29) interacts with Zn(2+). The short motif at 31 to 41 (PTVYNYIHIGN) is the 'HIGH' region element. Positions 209, 234, and 238 each coordinate Zn(2+). The 'KMSKS' region motif lies at 266-270 (KMSKS). Lys269 provides a ligand contact to ATP. Ser270 carries the post-translational modification Phosphoserine.

It belongs to the class-I aminoacyl-tRNA synthetase family. As to quaternary structure, monomer. The cofactor is Zn(2+).

The protein resides in the cytoplasm. It catalyses the reaction tRNA(Cys) + L-cysteine + ATP = L-cysteinyl-tRNA(Cys) + AMP + diphosphate. This Anoxybacillus flavithermus (strain DSM 21510 / WK1) protein is Cysteine--tRNA ligase.